The sequence spans 772 residues: Serine/threonine-protein kinase tousled-like 2 (772 aa).

Residues 24–126 form a disordered region; sequence GVSKGPLNSE…SNPLPRRVEQ (103 aa). The segment covering 29–44 has biased composition (polar residues); that stretch reads PLNSESSNQSLCSVGS. Residues 46 to 61 are compositionally biased toward basic and acidic residues; the sequence is SDKEVETPEKKQNDQR. Phosphoserine is present on residues Ser73, Ser94, Ser99, Ser115, Ser117, and Ser134. Residues 180–208 form a disordered region; it reads QNSPSSTGSGNTEHSCSSQKQISIQHRQT. The required for interaction with TLK1 and DYNLL1/LC8 stretch occupies residues 225–276; the sequence is NSDLEKKEGRIDDLLRANCDLRRQIDEQQKMLEKYKERLNRCVTMSKKLLIE. Coiled-coil stretches lie at residues 225 to 276 and 317 to 347; these read NSDL…LLIE and AFQN…KRKP. The segment at 342–385 is disordered; it reads LAKRKPPAMGQAPPATNEQKQRKSKTNGAENETPSSGNTELKDT. The segment covering 367–380 has biased composition (polar residues); the sequence is TNGAENETPSSGNT. Positions 403–451 form a coiled coil; that stretch reads HEQEEIFKLRLGHLKKEEAEIQAELERLERVRNLHIRELKRIHNEDNSQ. The Protein kinase domain occupies 462–741; the sequence is YLLLHLLGRG…VQQLACDPYL (280 aa). ATP is bound by residues 468-476 and Lys491; that span reads LGRGGFSEV. The Proton acceptor role is filled by Asp592. Ser750 carries the phosphoserine; by CHEK1 modification.

This sequence belongs to the protein kinase superfamily. Ser/Thr protein kinase family. In terms of assembly, monomer. May form homodimers; homodimerization may enhance autophosphoylation and enzymatic activity. Heterodimer with TLK1. Interacts with YWHAZ; association with 14-3-3 proteins such as YWHAZ regulates subcellular location. May also interact with FEZ1/LZTS1 and FEZ2. Interacts with CHD7 and CHD8. Interacts with DYNLL1/LC8. Requires Mg(2+) as cofactor. Post-translationally, phosphorylated at Ser-750, probably by CHEK1. In terms of processing, autophosphorylated; phosphorylation promotes the assembly of higher order oligomers and enzymatic activity. In terms of tissue distribution, detected in placenta, fetal liver, kidney, pancreas, heart and skeletal muscle. Highly expressed in testis. Detected in spleen, thymus, colon, ovary, small intestine, prostate and peripheral blood leukocytes. Almost undetectable in liver and lung.

The protein localises to the nucleus. It localises to the nucleoplasm. It is found in the cytoplasm. The protein resides in the perinuclear region. Its subcellular location is the cytoskeleton. It catalyses the reaction L-seryl-[protein] + ATP = O-phospho-L-seryl-[protein] + ADP + H(+). It carries out the reaction L-threonyl-[protein] + ATP = O-phospho-L-threonyl-[protein] + ADP + H(+). Cell cycle-regulated, with maximal activity in the S-phase. Rapidly and transiently inhibited by phosphorylation following the generation of DNA double-stranded breaks during S-phase, probably by CHEK1, possibly at Ser-750. This inhibition is cell cycle checkpoint- and ATM-dependent. Serine/threonine-protein kinase involved in the process of chromatin assembly and probably also DNA replication, transcription, repair, and chromosome segregation. Phosphorylates the chromatin assembly factors ASF1A and ASF1B. Phosphorylation of ASF1A prevents its proteasome-mediated degradation, thereby enhancing chromatin assembly. Negative regulator of amino acid starvation-induced autophagy. This chain is Serine/threonine-protein kinase tousled-like 2, found in Homo sapiens (Human).